Reading from the N-terminus, the 365-residue chain is Flagellar P-ring protein (365 aa).

The N-terminal stretch at 1–19 is a signal peptide; the sequence is MIKFLSALILLLVTTAAQA.

It belongs to the FlgI family. As to quaternary structure, the basal body constitutes a major portion of the flagellar organelle and consists of four rings (L,P,S, and M) mounted on a central rod.

It is found in the periplasm. The protein resides in the bacterial flagellum basal body. In terms of biological role, assembles around the rod to form the L-ring and probably protects the motor/basal body from shearing forces during rotation. This is Flagellar P-ring protein from Shigella dysenteriae serotype 1 (strain Sd197).